Reading from the N-terminus, the 255-residue chain is Electron transfer flavoprotein beta subunit lysine methyltransferase (255 aa).

The N-terminal 32 residues, 1–32 (MAFSLCWKAPRSPWSFLQAVNNGSPLFLWRTV), are a transit peptide targeting the mitochondrion.

The protein belongs to the methyltransferase superfamily. ETFBKMT family. As to quaternary structure, interacts with HSPD1; this protein may possibly be a methylation substrate.

It is found in the cytoplasm. The protein localises to the mitochondrion matrix. It catalyses the reaction L-lysyl-[protein] + 3 S-adenosyl-L-methionine = N(6),N(6),N(6)-trimethyl-L-lysyl-[protein] + 3 S-adenosyl-L-homocysteine + 3 H(+). Functionally, protein-lysine methyltransferase that selectively trimethylates the flavoprotein ETFB in mitochondria. Thereby, may negatively regulate the function of ETFB in electron transfer from Acyl-CoA dehydrogenases. In Mus musculus (Mouse), this protein is Electron transfer flavoprotein beta subunit lysine methyltransferase.